We begin with the raw amino-acid sequence, 366 residues long: Holliday junction branch migration complex subunit RuvB (366 aa).

The segment at 3-183 is large ATPase domain (RuvB-L); the sequence is ADGLVSAAAS…FGFTAHLDFY (181 aa). Residues L22, R23, G64, K67, T68, S69, 130–132, R173, Y183, and R220 each bind ATP; that span reads EDF. T68 contributes to the Mg(2+) binding site. A small ATPAse domain (RuvB-S) region spans residues 184-254; it reads APDELARVLT…VARAALRIYD (71 aa). The head domain (RuvB-H) stretch occupies residues 257-366; the sequence is GLGLDRLDRA…PEDGLHPGGG (110 aa). DNA-binding residues include R312 and R317.

Belongs to the RuvB family. As to quaternary structure, homohexamer. Forms an RuvA(8)-RuvB(12)-Holliday junction (HJ) complex. HJ DNA is sandwiched between 2 RuvA tetramers; dsDNA enters through RuvA and exits via RuvB. An RuvB hexamer assembles on each DNA strand where it exits the tetramer. Each RuvB hexamer is contacted by two RuvA subunits (via domain III) on 2 adjacent RuvB subunits; this complex drives branch migration. In the full resolvosome a probable DNA-RuvA(4)-RuvB(12)-RuvC(2) complex forms which resolves the HJ.

Its subcellular location is the cytoplasm. The catalysed reaction is ATP + H2O = ADP + phosphate + H(+). Functionally, the RuvA-RuvB-RuvC complex processes Holliday junction (HJ) DNA during genetic recombination and DNA repair, while the RuvA-RuvB complex plays an important role in the rescue of blocked DNA replication forks via replication fork reversal (RFR). RuvA specifically binds to HJ cruciform DNA, conferring on it an open structure. The RuvB hexamer acts as an ATP-dependent pump, pulling dsDNA into and through the RuvAB complex. RuvB forms 2 homohexamers on either side of HJ DNA bound by 1 or 2 RuvA tetramers; 4 subunits per hexamer contact DNA at a time. Coordinated motions by a converter formed by DNA-disengaged RuvB subunits stimulates ATP hydrolysis and nucleotide exchange. Immobilization of the converter enables RuvB to convert the ATP-contained energy into a lever motion, pulling 2 nucleotides of DNA out of the RuvA tetramer per ATP hydrolyzed, thus driving DNA branch migration. The RuvB motors rotate together with the DNA substrate, which together with the progressing nucleotide cycle form the mechanistic basis for DNA recombination by continuous HJ branch migration. Branch migration allows RuvC to scan DNA until it finds its consensus sequence, where it cleaves and resolves cruciform DNA. In Frankia alni (strain DSM 45986 / CECT 9034 / ACN14a), this protein is Holliday junction branch migration complex subunit RuvB.